The following is a 275-amino-acid chain: 2,3,4,5-tetrahydropyridine-2,6-dicarboxylate N-succinyltransferase (275 aa).

Substrate-binding residues include R105 and D142.

The protein belongs to the transferase hexapeptide repeat family. Homotrimer.

It is found in the cytoplasm. The enzyme catalyses (S)-2,3,4,5-tetrahydrodipicolinate + succinyl-CoA + H2O = (S)-2-succinylamino-6-oxoheptanedioate + CoA. The protein operates within amino-acid biosynthesis; L-lysine biosynthesis via DAP pathway; LL-2,6-diaminopimelate from (S)-tetrahydrodipicolinate (succinylase route): step 1/3. The sequence is that of 2,3,4,5-tetrahydropyridine-2,6-dicarboxylate N-succinyltransferase from Histophilus somni (strain 129Pt) (Haemophilus somnus).